Consider the following 191-residue polypeptide: Thiol:disulfide interchange protein TxlA (191 aa).

A helical membrane pass occupies residues 14-30 (ILVIAAALVLTILVVLG). Residues 27-148 (VVLGSRQPSA…LAANLDALVE (122 aa)) form the Thioredoxin domain. Cysteine 69 and cysteine 72 are oxidised to a cystine. Residues 165–185 (SADLQPSRSSQTDPRSHSGQV) are compositionally biased toward polar residues. The segment at 165-191 (SADLQPSRSSQTDPRSHSGQVQDGVLD) is disordered.

Belongs to the thioredoxin family.

The protein localises to the cell membrane. Functionally, required for disulfide bond formation in some proteins. Acts by transferring its disulfide bond to other proteins and is reduced in the process. The protein is Thiol:disulfide interchange protein TxlA (txlA) of Synechococcus elongatus (strain ATCC 33912 / PCC 7942 / FACHB-805) (Anacystis nidulans R2).